The sequence spans 236 residues: EP300-interacting inhibitor of differentiation 2 (236 aa).

Positions methionine 1–alanine 15 are enriched in polar residues. The segment at methionine 1–serine 102 is disordered. Composition is skewed to low complexity over residues arginine 32–alanine 68 and alanine 75–serine 102. Omega-N-methylarginine occurs at positions 63 and 79. Positions arginine 170 to alanine 190 form a coiled coil.

Heterodimer with EID2B. Interacts with the C-terminus of EP300. Interacts with HDAC1 and HDAC2. Interacts with SMAD2, SMAD4 and with the MH2 domain of SMAD3. As to expression, expressed in heart, brain, kidney and pancreas. Not detected in placenta.

The protein resides in the nucleus. Its function is as follows. Interacts with EP300 and acts as a repressor of MYOD-dependent transcription and muscle differentiation. Inhibits EP300 histone acetyltransferase activity. Acts as a repressor of TGFB/SMAD transcriptional responses. May act as a repressor of the TGFB/SMAD3-dependent signaling by selectively blocking formation of TGFB-induced SMAD3-SMAD4 complex. This Mus musculus (Mouse) protein is EP300-interacting inhibitor of differentiation 2.